Here is a 106-residue protein sequence, read N- to C-terminus: Iron-sulfur cluster assembly protein CyaY (106 aa).

Belongs to the frataxin family.

Involved in iron-sulfur (Fe-S) cluster assembly. May act as a regulator of Fe-S biogenesis. The sequence is that of Iron-sulfur cluster assembly protein CyaY from Salmonella newport (strain SL254).